Consider the following 188-residue polypeptide: Tetratricopeptide repeat protein 36 (188 aa).

TPR repeat units follow at residues 50-83 (SKALELQAVIAAEAGDLSTALERFGQAINLLPER), 85-117 (SAYNNRAQARRLQGDVAGALEDLERALALSGGR), and 122-155 (RQGFVQRGLVARLQGRDDDARRDFERAARLGSPF).

It belongs to the TTC36 family.

The chain is Tetratricopeptide repeat protein 36 (TTC36) from Bos taurus (Bovine).